The sequence spans 632 residues: 1-deoxy-D-xylulose-5-phosphate synthase (632 aa).

Thiamine diphosphate is bound by residues His79 and 120 to 122; that span reads GHA. Residue Asp152 coordinates Mg(2+). Thiamine diphosphate is bound by residues 153–154, Asn181, Phe293, and Glu377; that span reads GS. Residue Asn181 coordinates Mg(2+).

The protein belongs to the transketolase family. DXPS subfamily. Homodimer. The cofactor is Mg(2+). Thiamine diphosphate serves as cofactor.

The catalysed reaction is D-glyceraldehyde 3-phosphate + pyruvate + H(+) = 1-deoxy-D-xylulose 5-phosphate + CO2. The protein operates within metabolic intermediate biosynthesis; 1-deoxy-D-xylulose 5-phosphate biosynthesis; 1-deoxy-D-xylulose 5-phosphate from D-glyceraldehyde 3-phosphate and pyruvate: step 1/1. Catalyzes the acyloin condensation reaction between C atoms 2 and 3 of pyruvate and glyceraldehyde 3-phosphate to yield 1-deoxy-D-xylulose-5-phosphate (DXP). This is 1-deoxy-D-xylulose-5-phosphate synthase from Phocaeicola vulgatus (strain ATCC 8482 / DSM 1447 / JCM 5826 / CCUG 4940 / NBRC 14291 / NCTC 11154) (Bacteroides vulgatus).